A 376-amino-acid chain; its full sequence is N-acetyldiaminopimelate deacetylase (376 aa).

Residue Asp69 is part of the active site. Glu128 (proton acceptor) is an active-site residue.

It belongs to the peptidase M20A family. N-acetyldiaminopimelate deacetylase subfamily.

It carries out the reaction N-acetyl-(2S,6S)-2,6-diaminopimelate + H2O = (2S,6S)-2,6-diaminopimelate + acetate. It participates in amino-acid biosynthesis; L-lysine biosynthesis via DAP pathway; LL-2,6-diaminopimelate from (S)-tetrahydrodipicolinate (acetylase route): step 3/3. Catalyzes the conversion of N-acetyl-diaminopimelate to diaminopimelate and acetate. The chain is N-acetyldiaminopimelate deacetylase from Streptococcus pneumoniae (strain Taiwan19F-14).